A 384-amino-acid polypeptide reads, in one-letter code: 8-amino-7-oxononanoate synthase (384 aa).

Residue arginine 21 participates in substrate binding. 108–109 lines the pyridoxal 5'-phosphate pocket; that stretch reads GF. Histidine 133 contributes to the substrate binding site. Residues serine 179, histidine 207, and threonine 233 each contribute to the pyridoxal 5'-phosphate site. N6-(pyridoxal phosphate)lysine is present on lysine 236. Threonine 352 serves as a coordination point for substrate.

It belongs to the class-II pyridoxal-phosphate-dependent aminotransferase family. BioF subfamily. In terms of assembly, homodimer. Pyridoxal 5'-phosphate serves as cofactor.

It catalyses the reaction 6-carboxyhexanoyl-[ACP] + L-alanine + H(+) = (8S)-8-amino-7-oxononanoate + holo-[ACP] + CO2. The protein operates within cofactor biosynthesis; biotin biosynthesis. Its function is as follows. Catalyzes the decarboxylative condensation of pimeloyl-[acyl-carrier protein] and L-alanine to produce 8-amino-7-oxononanoate (AON), [acyl-carrier protein], and carbon dioxide. The chain is 8-amino-7-oxononanoate synthase from Escherichia coli (strain UTI89 / UPEC).